Reading from the N-terminus, the 841-residue chain is MNPNSKHNTNFTNLLKPSDSDIKQFAAQHICRLTDLLNRYAYEYYTLDAPSVPDAEYDKLFRELEALELNHPELKLPDSPTQRVGGEPLAGFAEVRHEVPMLSLTNAFSPQDENGVFDHAEMYAFDQRVRDGLDGGNPEYVIEPKFDGLAISLLYRDGVLVQAATRGDGTTGEDVTQNIKTVSNIPLRLHGENTPELIEVRGEVLMLKADFVALNKRQAENGQKPFANPRNAAAGSLRQLDSRITAQRKLHFFPYSVARQQDGFVAEEHIQELAYFQALGFSLPNGNFGCFKNIDEVLAFYEHMQQKRPELPYEIDGMVVKVNSLAQQHELGFISRAPRWAVAHKFPAEEALTIVEAIDVQIGRTGAVTPVARLQPVFVGGVTVTNATLHNQDEVSRKDVRVGDTVVVRRAGDVIPEVVRVIFERRPMRETAVAVSDGIGHRQDDLFAETPSANQTQSVPLHKPYRLPTHCPICRSEIEREEGEAVARCSGGMLCQAQRAQGLIHFASRKAMDIDGLGEKQIEQLVAQDLVRHFADLYRLDIPTLQKMKETADKTVAESDQMPSEGSSVGASGKHKKQPVKWAENILAGIEASKTPELARFLFALGIRHVGERTAKTLAQAFGTLERVRRAPEPVLACLPDIGTVVARSIAHFFAQAEQQAMIDELLAAGVAPQTQAVTIPPARHAEPQRWIARLPGFKISENKAQALWELAGKNIEGLQTDKALPTDWQAWRSEPQNAALLENLKTFFAQMPSEDEAAQGSDGINKAVAGKTFVLTGTLPTLKRDQAQSLIEAAGGKVSGSVSKKTDYVVAGEAAGSKLEKANALGVSVLSEAELLTLLG.

Residues 54–58 (DAEYD), 103–104 (SL), and glutamate 143 contribute to the NAD(+) site. The active-site N6-AMP-lysine intermediate is lysine 145. NAD(+) contacts are provided by arginine 166, glutamate 203, lysine 321, and lysine 345. 4 residues coordinate Zn(2+): cysteine 471, cysteine 474, cysteine 489, and cysteine 495. A disordered region spans residues 554–575 (KTVAESDQMPSEGSSVGASGKH). The span at 561 to 570 (QMPSEGSSVG) shows a compositional bias: polar residues. The BRCT domain maps to 764–841 (GINKAVAGKT…SEAELLTLLG (78 aa)).

It belongs to the NAD-dependent DNA ligase family. LigA subfamily. Mg(2+) is required as a cofactor. The cofactor is Mn(2+).

It catalyses the reaction NAD(+) + (deoxyribonucleotide)n-3'-hydroxyl + 5'-phospho-(deoxyribonucleotide)m = (deoxyribonucleotide)n+m + AMP + beta-nicotinamide D-nucleotide.. In terms of biological role, DNA ligase that catalyzes the formation of phosphodiester linkages between 5'-phosphoryl and 3'-hydroxyl groups in double-stranded DNA using NAD as a coenzyme and as the energy source for the reaction. It is essential for DNA replication and repair of damaged DNA. The polypeptide is DNA ligase (Neisseria meningitidis serogroup C (strain 053442)).